A 444-amino-acid polypeptide reads, in one-letter code: Acyl-CoA 6-desaturase (444 aa).

Topologically, residues 1–131 (MGKGGNQGEG…DMNLFKTNHV (131 aa)) are cytoplasmic. A Cytochrome b5 heme-binding domain is found at 18–95 (VPTFSWEEIQ…LKPLLIGELA (78 aa)). Residues 132–152 (FFLLLLAHIIALESIAWFTVF) traverse the membrane as a helical segment. Over 153–157 (YFGNG) the chain is Lumenal. Residues 158 to 178 (WISTLITAFVLATSQAQAGWL) form a helical membrane-spanning segment. Residues 179-264 (QHDYGHLSVY…KYLPYNHQHE (86 aa)) are Cytoplasmic-facing. The Histidine box-1 motif lies at 180 to 184 (HDYGH). The Histidine box-2 signature appears at 217–221 (HFQHH). Residues 265–285 (YFFLIGPPLLIPMYFQYQIIM) traverse the membrane as a helical segment. Residues 286 to 305 (TMIVHKNWVDLAWAISYYIR) lie on the Lumenal side of the membrane. A helical membrane pass occupies residues 306-326 (FFITYIPFYGILGALLFLNFI). The Cytoplasmic segment spans residues 327–444 (RFLESHWFVW…KLWLDAYLHK (118 aa)). Positions 382–386 (QIEHH) match the Histidine box-3 motif.

This sequence belongs to the fatty acid desaturase type 1 family.

It localises to the endoplasmic reticulum membrane. The enzyme catalyses (9Z,12Z)-octadecadienoyl-CoA + 2 Fe(II)-[cytochrome b5] + O2 + 2 H(+) = (6Z,9Z,12Z)-octadecatrienoyl-CoA + 2 Fe(III)-[cytochrome b5] + 2 H2O. The catalysed reaction is (9Z,12Z,15Z)-octadecatrienoyl-CoA + 2 Fe(II)-[cytochrome b5] + O2 + 2 H(+) = (6Z,9Z,12Z,15Z)-octadecatetraenoyl-CoA + 2 Fe(III)-[cytochrome b5] + 2 H2O. It carries out the reaction (9Z,12Z,15Z,18Z,21Z)-tetracosapentaenoyl-CoA + 2 Fe(II)-[cytochrome b5] + O2 + 2 H(+) = (6Z,9Z,12Z,15Z,18Z,21Z)-tetracosahexaenoyl-CoA + 2 Fe(III)-[cytochrome b5] + 2 H2O. It catalyses the reaction (11E)-octadecenoyl-CoA + 2 Fe(II)-[cytochrome b5] + O2 + 2 H(+) = (6Z,11E)-octadecadienoyl-CoA + 2 Fe(III)-[cytochrome b5] + 2 H2O. The enzyme catalyses (11Z,14Z)-eicosadienoyl-CoA + 2 Fe(II)-[cytochrome b5] + O2 + 2 H(+) = (8Z,11Z,14Z)-eicosatrienoyl-CoA + 2 Fe(III)-[cytochrome b5] + 2 H2O. The catalysed reaction is (11Z,14Z,17Z)-eicosatrienoyl-CoA + 2 Fe(II)-[cytochrome b5] + O2 + 2 H(+) = (8Z,11Z,14Z,17Z)-eicosatetraenoyl-CoA + 2 Fe(III)-[cytochrome b5] + 2 H2O. The protein operates within lipid metabolism; polyunsaturated fatty acid biosynthesis. Its function is as follows. Involved in the biosynthesis of highly unsaturated fatty acids (HUFA) from the essential polyunsaturated fatty acids (PUFA) linoleic acid (LA) (18:2n-6) and alpha-linolenic acid (ALA) (18:3n-3) precursors, acting as a fatty acyl-coenzyme A (CoA) desaturase that introduces a cis double bond at carbon 6 of the fatty acyl chain. Catalyzes the first and rate limiting step in this pathway which is the desaturation of LA (18:2n-6) and ALA (18:3n-3) into gamma-linoleate (GLA) (18:3n-6) and stearidonate (18:4n-3), respectively. Subsequently, in the biosynthetic pathway of HUFA n-3 series, it desaturates tetracosapentaenoate (24:5n-3) to tetracosahexaenoate (24:6n-3), which is then converted to docosahexaenoate (DHA)(22:6n-3), an important lipid for nervous system function. It can also desaturate (11E)-octadecenoate (trans-vaccenoate) at carbon 6 generating (6Z,11E)-octadecadienoate. In addition to Delta-6 activity, this enzyme exhibits Delta-8 activity with slight biases toward n-3 fatty acyl-CoA substrates. The polypeptide is Acyl-CoA 6-desaturase (FADS2) (Pongo abelii (Sumatran orangutan)).